A 401-amino-acid chain; its full sequence is Dynactin subunit 2 (401 aa).

Residues Met1–Leu25 form a disordered region. Ala2 carries the N-acetylalanine modification. Phosphotyrosine is present on Tyr6. Ser83 is subject to Phosphoserine. Tyr86 is subject to Phosphotyrosine. A coiled-coil region spans residues Pro99–Lys132. A phosphothreonine mark is found at Thr134 and Thr198. The stretch at Glu214 to Ala244 forms a coiled coil. At Ser320 the chain carries Phosphoserine. Residues Arg379–Leu399 adopt a coiled-coil conformation.

This sequence belongs to the dynactin subunit 2 family. As to quaternary structure, subunit of dynactin, a multiprotein complex part of a tripartite complex with dynein and a adapter, such as BICDL1, BICD2 or HOOK3. The dynactin complex is built around ACTR1A/ACTB filament and consists of an actin-related filament composed of a shoulder domain, a pointed end and a barbed end. Its length is defined by its flexible shoulder domain. The soulder is composed of 2 DCTN1 subunits, 4 DCTN2 and 2 DCTN3. The 4 DCNT2 (via N-terminus) bind the ACTR1A filament and act as molecular rulers to determine the length. The pointed end is important for binding dynein-dynactin cargo adapters and consists of 4 subunits: ACTR10, DCNT4, DCTN5 and DCTN6. The barbed end is composed of a CAPZA1:CAPZB heterodimers, which binds ACTR1A/ACTB filament and dynactin and stabilizes dynactin. Interacts with BICD2 and CEP135. Interacts with DYNAP. Interacts with ECPAS. Interacts with MAPRE1.

It is found in the cytoplasm. It localises to the cytoskeleton. The protein resides in the microtubule organizing center. The protein localises to the centrosome. Its subcellular location is the membrane. In terms of biological role, part of the dynactin complex that activates the molecular motor dynein for ultra-processive transport along microtubules. In the dynactin soulder domain, binds the ACTR1A filament and acts as a molecular ruler to determine the length. Modulates cytoplasmic dynein binding to an organelle, and plays a role in prometaphase chromosome alignment and spindle organization during mitosis. Involved in anchoring microtubules to centrosomes. May play a role in synapse formation during brain development. The polypeptide is Dynactin subunit 2 (Homo sapiens (Human)).